The sequence spans 427 residues: Glutamate-1-semialdehyde 2,1-aminomutase (427 aa).

Lys266 carries the post-translational modification N6-(pyridoxal phosphate)lysine.

The protein belongs to the class-III pyridoxal-phosphate-dependent aminotransferase family. HemL subfamily. In terms of assembly, homodimer. Requires pyridoxal 5'-phosphate as cofactor.

It localises to the cytoplasm. It carries out the reaction (S)-4-amino-5-oxopentanoate = 5-aminolevulinate. It functions in the pathway porphyrin-containing compound metabolism; protoporphyrin-IX biosynthesis; 5-aminolevulinate from L-glutamyl-tRNA(Glu): step 2/2. This is Glutamate-1-semialdehyde 2,1-aminomutase from Aromatoleum aromaticum (strain DSM 19018 / LMG 30748 / EbN1) (Azoarcus sp. (strain EbN1)).